A 459-amino-acid polypeptide reads, in one-letter code: Cysteine--tRNA ligase (459 aa).

Zn(2+) is bound at residue C29. The 'HIGH' region motif lies at 31-41; the sequence is MTVYDLCHLGH. The Zn(2+) site is built by C213, H238, and E242. A 'KMSKS' region motif is present at residues 270–274; the sequence is KMSKS. K273 lines the ATP pocket.

Belongs to the class-I aminoacyl-tRNA synthetase family. As to quaternary structure, monomer. The cofactor is Zn(2+).

The protein resides in the cytoplasm. The catalysed reaction is tRNA(Cys) + L-cysteine + ATP = L-cysteinyl-tRNA(Cys) + AMP + diphosphate. The chain is Cysteine--tRNA ligase from Albidiferax ferrireducens (strain ATCC BAA-621 / DSM 15236 / T118) (Rhodoferax ferrireducens).